We begin with the raw amino-acid sequence, 660 residues long: Arginine--tRNA ligase, cytoplasmic (660 aa).

Met-1 is subject to N-acetylmethionine. Positions 1-72 are could be involved in the assembly of the multisynthetase complex; it reads MDALVAHCSA…QAERNKPTKT (72 aa). L-arginine is bound by residues 200–202, His-211, Tyr-384, Asp-388, and Gln-412; that span reads SPN. Positions 201–212 match the 'HIGH' region motif; it reads PNIAKEMHVGHL. An interaction with tRNA region spans residues 529–543; the sequence is NTAAYLLYAFTRIRS.

The protein belongs to the class-I aminoacyl-tRNA synthetase family. As to quaternary structure, interacts (via N-terminus) with AIMP1 (via N-terminus); this stimulates its catalytic activity. Interacts (via N-terminus) with LARS2 (via C-terminus). Monomer. Part of a multisubunit complex that groups tRNA ligases for Arg (RARS1), Asp (DARS1), Gln (QARS1), Ile (IARS1), Leu (LARS1), Lys (KARS1), Met (MARS1) the bifunctional ligase for Glu and Pro (EPRS1) and the auxiliary subunits AIMP1/p43, AIMP2/p38 and EEF1E1/p18. Interacts with QARS1. Part of a complex composed of RARS1, QARS1 and AIMP1.

It localises to the cytoplasm. The protein resides in the cytosol. The enzyme catalyses tRNA(Arg) + L-arginine + ATP = L-arginyl-tRNA(Arg) + AMP + diphosphate. Forms part of a macromolecular complex that catalyzes the attachment of specific amino acids to cognate tRNAs during protein synthesis. Modulates the secretion of AIMP1 and may be involved in generation of the inflammatory cytokine EMAP2 from AIMP1. This Bos taurus (Bovine) protein is Arginine--tRNA ligase, cytoplasmic (RARS1).